A 235-amino-acid polypeptide reads, in one-letter code: Small ribosomal subunit protein uS3 (235 aa).

One can recognise a KH type-2 domain in the interval 39-107 (VRQFLNKELA…PAQINIAEVK (69 aa)). Residues 215–226 (AQQPEQQPATPK) are compositionally biased toward low complexity. Positions 215 to 235 (AQQPEQQPATPKKAPRGKGRK) are disordered.

It belongs to the universal ribosomal protein uS3 family. In terms of assembly, part of the 30S ribosomal subunit. Forms a tight complex with proteins S10 and S14.

In terms of biological role, binds the lower part of the 30S subunit head. Binds mRNA in the 70S ribosome, positioning it for translation. In Histophilus somni (strain 129Pt) (Haemophilus somnus), this protein is Small ribosomal subunit protein uS3.